Reading from the N-terminus, the 198-residue chain is Transcription antitermination protein NusB (198 aa).

Belongs to the NusB family.

Functionally, involved in transcription antitermination. Required for transcription of ribosomal RNA (rRNA) genes. Binds specifically to the boxA antiterminator sequence of the ribosomal RNA (rrn) operons. The chain is Transcription antitermination protein NusB from Methylococcus capsulatus (strain ATCC 33009 / NCIMB 11132 / Bath).